Here is a 292-residue protein sequence, read N- to C-terminus: Oxidative stress-responsive serine-rich protein 1 (292 aa).

A disordered region spans residues 24–178; that stretch reads ASGSVASLSV…ATQVPQASLK (155 aa). The segment covering 65-83 has biased composition (basic residues); the sequence is STRKSSRGAVRTQRRRRSK. 2 positions are modified to phosphothreonine: Thr143 and Thr233.

This Homo sapiens (Human) protein is Oxidative stress-responsive serine-rich protein 1 (OSER1).